Here is a 417-residue protein sequence, read N- to C-terminus: NADH-quinone oxidoreductase subunit D (417 aa).

Belongs to the complex I 49 kDa subunit family. As to quaternary structure, NDH-1 is composed of 14 different subunits. Subunits NuoB, C, D, E, F, and G constitute the peripheral sector of the complex.

The protein localises to the cell inner membrane. The enzyme catalyses a quinone + NADH + 5 H(+)(in) = a quinol + NAD(+) + 4 H(+)(out). In terms of biological role, NDH-1 shuttles electrons from NADH, via FMN and iron-sulfur (Fe-S) centers, to quinones in the respiratory chain. The immediate electron acceptor for the enzyme in this species is believed to be ubiquinone. Couples the redox reaction to proton translocation (for every two electrons transferred, four hydrogen ions are translocated across the cytoplasmic membrane), and thus conserves the redox energy in a proton gradient. This Azoarcus sp. (strain BH72) protein is NADH-quinone oxidoreductase subunit D.